Here is a 488-residue protein sequence, read N- to C-terminus: ATP synthase subunit beta, chloroplastic (488 aa).

An ATP-binding site is contributed by 170–177 (GGAGVGKT).

It belongs to the ATPase alpha/beta chains family. As to quaternary structure, F-type ATPases have 2 components, CF(1) - the catalytic core - and CF(0) - the membrane proton channel. CF(1) has five subunits: alpha(3), beta(3), gamma(1), delta(1), epsilon(1). CF(0) has four main subunits: a(1), b(1), b'(1) and c(9-12).

The protein localises to the plastid. The protein resides in the chloroplast thylakoid membrane. The enzyme catalyses ATP + H2O + 4 H(+)(in) = ADP + phosphate + 5 H(+)(out). Functionally, produces ATP from ADP in the presence of a proton gradient across the membrane. The catalytic sites are hosted primarily by the beta subunits. The sequence is that of ATP synthase subunit beta, chloroplastic from Picea abies (Norway spruce).